A 498-amino-acid chain; its full sequence is ATP synthase subunit beta, chloroplastic (498 aa).

172-179 serves as a coordination point for ATP; sequence GGAGVGKT.

This sequence belongs to the ATPase alpha/beta chains family. As to quaternary structure, F-type ATPases have 2 components, CF(1) - the catalytic core - and CF(0) - the membrane proton channel. CF(1) has five subunits: alpha(3), beta(3), gamma(1), delta(1), epsilon(1). CF(0) has four main subunits: a(1), b(1), b'(1) and c(9-12).

It is found in the plastid. The protein resides in the chloroplast thylakoid membrane. The catalysed reaction is ATP + H2O + 4 H(+)(in) = ADP + phosphate + 5 H(+)(out). Functionally, produces ATP from ADP in the presence of a proton gradient across the membrane. The catalytic sites are hosted primarily by the beta subunits. This is ATP synthase subunit beta, chloroplastic from Calycanthus floridus var. glaucus (Eastern sweetshrub).